The chain runs to 234 residues: Glucosamine-6-phosphate deaminase (234 aa).

Asp62 acts as the Proton acceptor; for enolization step in catalysis. The active-site For ring-opening step is the Asn128. Catalysis depends on His130, which acts as the Proton acceptor; for ring-opening step. Glu135 functions as the For ring-opening step in the catalytic mechanism.

The protein belongs to the glucosamine/galactosamine-6-phosphate isomerase family. NagB subfamily.

The enzyme catalyses alpha-D-glucosamine 6-phosphate + H2O = beta-D-fructose 6-phosphate + NH4(+). The protein operates within amino-sugar metabolism; N-acetylneuraminate degradation; D-fructose 6-phosphate from N-acetylneuraminate: step 5/5. Its function is as follows. Catalyzes the reversible isomerization-deamination of glucosamine 6-phosphate (GlcN6P) to form fructose 6-phosphate (Fru6P) and ammonium ion. The polypeptide is Glucosamine-6-phosphate deaminase (Streptococcus equi subsp. zooepidemicus (strain MGCS10565)).